The following is a 272-amino-acid chain: METYAVFGNPIAHSKSPFIHQQFAQQLNIEHPYGRVLAPINDFINTLNAFFSAGGKGANVTVPFKEEAFARADELTERAALAGAVNTLKRLEDGRLLGDNTDGIGLLSDLERLSFIRPGLRILLIGAGGASRGVLLPLLSLDCAVTITNRTVSRAEELAKLFAHTGSIQALGMDELEGHEFDLIINATSSGISGDIPAIPASLIHSGMCCYDMFYQKGKTPFLAWCELRGSKRNADGLGMLVAQAAHAFLLWHGVLPDIEPVIKQLQEELSA.

Shikimate-binding positions include 14–16 and Thr61; that span reads SKS. Catalysis depends on Lys65, which acts as the Proton acceptor. Glu77 provides a ligand contact to NADP(+). Residues Asn86 and Asp102 each contribute to the shikimate site. NADP(+)-binding positions include 126 to 130, 149 to 154, and Met213; these read GAGGA and NRTVSR. Position 215 (Tyr215) interacts with shikimate. Gly237 is an NADP(+) binding site.

This sequence belongs to the shikimate dehydrogenase family. As to quaternary structure, homodimer.

The catalysed reaction is shikimate + NADP(+) = 3-dehydroshikimate + NADPH + H(+). Its pathway is metabolic intermediate biosynthesis; chorismate biosynthesis; chorismate from D-erythrose 4-phosphate and phosphoenolpyruvate: step 4/7. Its function is as follows. Involved in the biosynthesis of the chorismate, which leads to the biosynthesis of aromatic amino acids. Catalyzes the reversible NADPH linked reduction of 3-dehydroshikimate (DHSA) to yield shikimate (SA). This chain is Shikimate dehydrogenase (NADP(+)), found in Escherichia coli O7:K1 (strain IAI39 / ExPEC).